The chain runs to 97 residues: Large ribosomal subunit protein bL31 (97 aa).

Positions 76 to 97 (KTPKKAKGKTEEYTKHRSLNEL) are disordered. Residues 83 to 97 (GKTEEYTKHRSLNEL) show a composition bias toward basic and acidic residues.

The protein belongs to the bacterial ribosomal protein bL31 family. Type A subfamily. As to quaternary structure, part of the 50S ribosomal subunit.

In terms of biological role, binds the 23S rRNA. The protein is Large ribosomal subunit protein bL31 of Mycoplasma pneumoniae (strain ATCC 29342 / M129 / Subtype 1) (Mycoplasmoides pneumoniae).